A 169-amino-acid chain; its full sequence is N5-carboxyaminoimidazole ribonucleotide mutase (169 aa).

Ser-16, Asp-19, and Arg-46 together coordinate substrate.

Belongs to the AIR carboxylase family. Class I subfamily.

It carries out the reaction 5-carboxyamino-1-(5-phospho-D-ribosyl)imidazole + H(+) = 5-amino-1-(5-phospho-D-ribosyl)imidazole-4-carboxylate. It participates in purine metabolism; IMP biosynthesis via de novo pathway; 5-amino-1-(5-phospho-D-ribosyl)imidazole-4-carboxylate from 5-amino-1-(5-phospho-D-ribosyl)imidazole (N5-CAIR route): step 2/2. In terms of biological role, catalyzes the conversion of N5-carboxyaminoimidazole ribonucleotide (N5-CAIR) to 4-carboxy-5-aminoimidazole ribonucleotide (CAIR). The sequence is that of N5-carboxyaminoimidazole ribonucleotide mutase from Escherichia coli O157:H7.